The primary structure comprises 435 residues: Methylenetetrahydrofolate--tRNA-(uracil-5-)-methyltransferase TrmFO (435 aa).

Gly9 to Gly14 lines the FAD pocket.

It belongs to the MnmG family. TrmFO subfamily. FAD serves as cofactor.

It is found in the cytoplasm. The enzyme catalyses uridine(54) in tRNA + (6R)-5,10-methylene-5,6,7,8-tetrahydrofolate + NADH + H(+) = 5-methyluridine(54) in tRNA + (6S)-5,6,7,8-tetrahydrofolate + NAD(+). The catalysed reaction is uridine(54) in tRNA + (6R)-5,10-methylene-5,6,7,8-tetrahydrofolate + NADPH + H(+) = 5-methyluridine(54) in tRNA + (6S)-5,6,7,8-tetrahydrofolate + NADP(+). Catalyzes the folate-dependent formation of 5-methyl-uridine at position 54 (M-5-U54) in all tRNAs. This is Methylenetetrahydrofolate--tRNA-(uracil-5-)-methyltransferase TrmFO from Citrifermentans bemidjiense (strain ATCC BAA-1014 / DSM 16622 / JCM 12645 / Bem) (Geobacter bemidjiensis).